We begin with the raw amino-acid sequence, 224 residues long: uncharacterized protein (224 aa).

Histidine 57, histidine 59, aspartate 61, histidine 62, histidine 138, aspartate 162, and histidine 203 together coordinate Zn(2+).

It belongs to the metallo-beta-lactamase superfamily. Glyoxalase II family. Zn(2+) serves as cofactor.

This is an uncharacterized protein from Mycobacterium tuberculosis (strain CDC 1551 / Oshkosh).